The chain runs to 365 residues: Peptidyl-prolyl cis-trans isomerase FKBP42 (365 aa).

Residues 1 to 15 (MDESLEHQTQTHDQE) show a composition bias toward basic and acidic residues. The tract at residues 1–44 (MDESLEHQTQTHDQESEIVTEGSAVVHSEPSQEGNVPPKVDSEA) is disordered. The interaction with MDR1/PGP1 stretch occupies residues 1-163 (MDESLEHQTQ…EVIGFDETKE (163 aa)). Residues 67–159 (YSTCFLHYRA…LYEVEVIGFD (93 aa)) enclose the PPIase FKBP-type domain. Positions 163-337 (EGKARSDMTV…GKDEGGAKSK (175 aa)) are interaction with MRP1. TPR repeat units lie at residues 179–212 (ADRRKMDGNSLFKEEKLEEAMQQYEMAIAYMGDD), 230–263 (NPCHLNIAACLIKLKRYDEAIGHCNIVLTEEEKN), and 264–297 (PKALFRRGKAKAELGQMDSARDDFRKAQKYAPDD). The segment at 310-326 (QEKALYQKQKEMYKGIF) is calmodulin-binding. The helical; Anchor for type IV membrane protein transmembrane segment at 338–357 (SLFWLIVLWQWFVSLFSRIF) threads the bilayer.

The protein belongs to the FKBP-type PPIase family. In terms of assembly, interacts with calmodulin (CaM), MRP1, MRP2, MDR1/PGP1, MDR11/PGP19 and SHD/HSP90. Interacts with 1-naphthylphthalamic acid (NPA).

The protein resides in the cell membrane. Its subcellular location is the vacuole membrane. It is found in the endoplasmic reticulum. It carries out the reaction [protein]-peptidylproline (omega=180) = [protein]-peptidylproline (omega=0). Functionally, PPIases accelerate the folding of proteins. It catalyzes the cis-trans isomerization of proline imidic peptide bonds in oligopeptides. Modulates the uptake of MRP substrates into the vacuole; reduces metolachlor-GS (MOC-GS) and enhances 17-beta-estradiol 17-(beta-D-glucuronide) (E(2)17betaG) uptake. Regulates cell elongation and orientation. Functions as a positive regulator of PGP1-mediated auxin transport. Confers drug modulation of PGP1 efflux activity as interaction with NPA or flavonol quercetin prevents its physical and functional interaction with PGP1. Required for the proper localization of auxin-related ABCB transporters. Plays a role in brassinosteroid (BR) signaling pathway. Required for seed development by promoting stamen elongation and, to a lesser extent, anther dehiscence and pollen maturation, probably as a chaperone helping ABCB1 and ABCB19 auxin transporters localization and activation. Involved in auxin signaling in nectaries to promote starch accumulation to attract visiting pollinators. The protein is Peptidyl-prolyl cis-trans isomerase FKBP42 of Arabidopsis thaliana (Mouse-ear cress).